Reading from the N-terminus, the 335-residue chain is Mycobacterial beta-ketoacyl-[acyl-carrier-protein] synthase III (335 aa).

Catalysis depends on residues C122 and H258. Positions 259 to 263 (QANSR) are ACP-binding. N289 is a catalytic residue.

The protein belongs to the thiolase-like superfamily. FabH family. As to quaternary structure, homodimer.

Its subcellular location is the cytoplasm. The catalysed reaction is malonyl-[ACP] + dodecanoyl-CoA + H(+) = 3-oxotetradecanoyl-[ACP] + CO2 + CoA. Its pathway is lipid metabolism; fatty acid biosynthesis. The protein operates within lipid metabolism; mycolic acid biosynthesis. Catalyzes the condensation reaction of fatty acid synthesis by the addition to an acyl acceptor of two carbons from malonyl-ACP. Catalyzes the first condensation reaction which initiates fatty acid synthesis and may therefore play a role in governing the total rate of fatty acid production. Possesses both acetoacetyl-ACP synthase and acetyl transacylase activities. Its substrate specificity determines the biosynthesis of branched-chain and/or straight-chain of fatty acids. This Mycobacterium bovis (strain ATCC BAA-935 / AF2122/97) protein is Mycobacterial beta-ketoacyl-[acyl-carrier-protein] synthase III.